Consider the following 1032-residue polypeptide: Argonaute protein hrde-1 (1032 aa).

2 disordered regions span residues 1–51 and 298–375; these read MADL…PIGR and KLSE…YSPS. The interval 1-551 is required to recruit the small-RNA amplification machinery to gene targets and promote gene silencing; that stretch reads MADLLDKIMG…IQMTAKLLPP (551 aa). The span at 18 to 33 shows a compositional bias: basic and acidic residues; it reads PKRDNRMNQDKDEPTS. A compositionally biased stretch (gly residues) spans 303-313; it reads KGGGGGRGGYG. Composition is skewed to basic and acidic residues over residues 315–335 and 343–364; these read SDSRDSRGGYRGGRSDSRDFR and GNDRYRDESRGRRDMYDSRRDS. A PAZ domain is found at 376 to 481; that stretch reads DAAELEHAFG…FPMELLRIAP (106 aa). Positions 650-977 constitute a Piwi domain; sequence DILVGIAREK…LAKRGRNNYK (328 aa).

The protein belongs to the argonaute family. WAGO subfamily. In terms of tissue distribution, expressed in the nuclei of male and female germ cells.

It is found in the cytoplasm. The protein localises to the cytoplasmic ribonucleoprotein granule. Its subcellular location is the nucleus. Argonaute protein which is involved in the endogenous small interfering RNA (endo-siRNA) pathway and is required for RNA-mediated gene silencing (RNAi) in the germline. Interacts with secondary 22G-RNAs in an hrde-2-dependent manner; 22G-RNAs are RNA-dependent RNA polymerase-derived endo-siRNAs, typically 22 nucleotides in length with a 5'-guanosine residue. Plays a key role in transgenerational epigenetic inheritance and germline immortality. May be involved in transgenerational gene silencing both by inducing subnuclear-co-localization of target genes into heterochromatin and by activation of small RNA amplification in the nuage. In Caenorhabditis elegans, this protein is Argonaute protein hrde-1.